Reading from the N-terminus, the 191-residue chain is Fe/S biogenesis protein NfuA (191 aa).

2 residues coordinate [4Fe-4S] cluster: C149 and C152.

The protein belongs to the NfuA family. Homodimer. [4Fe-4S] cluster serves as cofactor.

In terms of biological role, involved in iron-sulfur cluster biogenesis. Binds a 4Fe-4S cluster, can transfer this cluster to apoproteins, and thereby intervenes in the maturation of Fe/S proteins. Could also act as a scaffold/chaperone for damaged Fe/S proteins. This chain is Fe/S biogenesis protein NfuA, found in Hamiltonella defensa subsp. Acyrthosiphon pisum (strain 5AT).